Reading from the N-terminus, the 419-residue chain is MDSKYDTLIYNVRIASMQHNGMPYGELPPTAIAIKEGHIVALLSCDEQLNDALQQTSTVIDGSRLIPCNENEQPTLPWLLPGFIDCHTHLVYGGNRAEEFEMRLQGASYVEIAERGGGIKGTVKKTRQADEQTLLNTAIKRAMRLCEEGVTTIEVKSGYGLDVDTEIRMLSVAKSLEKHLPVTIQTTYLGAHALPNEFNHDADAYIDFICRDALPQIASLGLADAVDVFCETIGFSLQQTERVFSCAKQYGLPVKAHVEQLSDSKGAVLAAKYGALSVDHIEYLVDSDIPSLVKSETVAVLLPGAFYYLSEVQKPPVEALRAHNVPIAVATDFNPGSSPLASLLTALNMSCVLFKLTPEEALRGATEHAASALGLNDRGVVDIGNVADLTLWDIETPAELVYCINGHRPIAVFKDGKHV.

The Fe(3+) site is built by His-87 and His-89. Residues His-87 and His-89 each coordinate Zn(2+). Residues Arg-96, Tyr-159, and His-192 each contribute to the 4-imidazolone-5-propanoate site. An N-formimidoyl-L-glutamate-binding site is contributed by Tyr-159. Residue His-257 coordinates Fe(3+). His-257 is a Zn(2+) binding site. Gln-260 serves as a coordination point for 4-imidazolone-5-propanoate. Asp-332 lines the Fe(3+) pocket. Asp-332 lines the Zn(2+) pocket. Residues Asn-334 and Gly-336 each contribute to the N-formimidoyl-L-glutamate site. Ser-337 contacts 4-imidazolone-5-propanoate.

This sequence belongs to the metallo-dependent hydrolases superfamily. HutI family. Requires Zn(2+) as cofactor. Fe(3+) serves as cofactor.

The protein localises to the cytoplasm. It catalyses the reaction 4-imidazolone-5-propanoate + H2O = N-formimidoyl-L-glutamate. It participates in amino-acid degradation; L-histidine degradation into L-glutamate; N-formimidoyl-L-glutamate from L-histidine: step 3/3. In terms of biological role, catalyzes the hydrolytic cleavage of the carbon-nitrogen bond in imidazolone-5-propanoate to yield N-formimidoyl-L-glutamate. It is the third step in the universal histidine degradation pathway. The sequence is that of Imidazolonepropionase from Alteromonas mediterranea (strain DSM 17117 / CIP 110805 / LMG 28347 / Deep ecotype).